Here is a 257-residue protein sequence, read N- to C-terminus: Imidazole glycerol phosphate synthase subunit HisF (257 aa).

Residues D12 and D131 contribute to the active site.

The protein belongs to the HisA/HisF family. Heterodimer of HisH and HisF.

It localises to the cytoplasm. It carries out the reaction 5-[(5-phospho-1-deoxy-D-ribulos-1-ylimino)methylamino]-1-(5-phospho-beta-D-ribosyl)imidazole-4-carboxamide + L-glutamine = D-erythro-1-(imidazol-4-yl)glycerol 3-phosphate + 5-amino-1-(5-phospho-beta-D-ribosyl)imidazole-4-carboxamide + L-glutamate + H(+). It functions in the pathway amino-acid biosynthesis; L-histidine biosynthesis; L-histidine from 5-phospho-alpha-D-ribose 1-diphosphate: step 5/9. IGPS catalyzes the conversion of PRFAR and glutamine to IGP, AICAR and glutamate. The HisF subunit catalyzes the cyclization activity that produces IGP and AICAR from PRFAR using the ammonia provided by the HisH subunit. The chain is Imidazole glycerol phosphate synthase subunit HisF from Burkholderia ambifaria (strain MC40-6).